The following is a 438-amino-acid chain: Aspartate--tRNA(Asp/Asn) ligase (438 aa).

E176 contributes to the L-aspartate binding site. Residues 198-201 (QLYK) form an aspartate region. R220 is an L-aspartate binding site. Residues 220 to 222 (RAE), 228 to 230 (RHL), and E361 each bind ATP. Mg(2+)-binding residues include E361 and S364. L-aspartate contacts are provided by S364 and R368. 409 to 412 (GADR) provides a ligand contact to ATP.

Belongs to the class-II aminoacyl-tRNA synthetase family. Type 2 subfamily. As to quaternary structure, homodimer. Requires Mg(2+) as cofactor.

Its subcellular location is the cytoplasm. The enzyme catalyses tRNA(Asx) + L-aspartate + ATP = L-aspartyl-tRNA(Asx) + AMP + diphosphate. Functionally, aspartyl-tRNA synthetase with relaxed tRNA specificity since it is able to aspartylate not only its cognate tRNA(Asp) but also tRNA(Asn). Reaction proceeds in two steps: L-aspartate is first activated by ATP to form Asp-AMP and then transferred to the acceptor end of tRNA(Asp/Asn). The protein is Aspartate--tRNA(Asp/Asn) ligase of Methanococcus maripaludis (strain C5 / ATCC BAA-1333).